The sequence spans 83 residues: Host transcription reprogramming factor 9 (83 aa).

Residues 1–19 form the signal peptide; that stretch reads MQFSKITLAIVLYALGTAA. A C2H2-type zinc finger spans residues 54–77; that stretch reads YRCDKCEKEFVKGNDFFNHGGRGH.

It is found in the secreted. The protein localises to the host nucleus. Functionally, probable secreted effector that translocates into the nuclei of host cells to reprogram the expression of targeted genes by binding on effector binding elements in rice. This Pyricularia oryzae (strain 70-15 / ATCC MYA-4617 / FGSC 8958) (Rice blast fungus) protein is Host transcription reprogramming factor 9.